A 121-amino-acid polypeptide reads, in one-letter code: Small ribosomal subunit protein uS13 (121 aa).

Residues 92–121 (RRGLPVRGQKTKNNSRTRKGPRKTMANKKK) are disordered.

This sequence belongs to the universal ribosomal protein uS13 family. As to quaternary structure, part of the 30S ribosomal subunit. Forms a loose heterodimer with protein S19. Forms two bridges to the 50S subunit in the 70S ribosome.

Functionally, located at the top of the head of the 30S subunit, it contacts several helices of the 16S rRNA. In the 70S ribosome it contacts the 23S rRNA (bridge B1a) and protein L5 of the 50S subunit (bridge B1b), connecting the 2 subunits; these bridges are implicated in subunit movement. Contacts the tRNAs in the A and P-sites. This is Small ribosomal subunit protein uS13 from Oceanobacillus iheyensis (strain DSM 14371 / CIP 107618 / JCM 11309 / KCTC 3954 / HTE831).